The chain runs to 498 residues: Galactose-1-phosphate uridylyltransferase (498 aa).

The protein belongs to the galactose-1-phosphate uridylyltransferase type 2 family.

The protein resides in the cytoplasm. It catalyses the reaction alpha-D-galactose 1-phosphate + UDP-alpha-D-glucose = alpha-D-glucose 1-phosphate + UDP-alpha-D-galactose. It functions in the pathway carbohydrate metabolism; galactose metabolism. This is Galactose-1-phosphate uridylyltransferase from Clostridium perfringens (strain SM101 / Type A).